Consider the following 67-residue polypeptide: MMTALETRLSVADGTHAAALRQRLQAALAECRRELARGACPEHFQFLQQQARALEGGLGILSQLTED.

The stretch at 16 to 37 (HAAALRQRLQAALAECRRELAR) forms a coiled coil.

Belongs to the YscE family. As to quaternary structure, forms a stable ternary complex with PscF/SctF and PscG within the cytoplasm. Co-stabilized by PscG.

Its subcellular location is the cytoplasm. In terms of biological role, chaperone of the type III secretion system (T3SS), also called injectisome, which is used to inject bacterial effector proteins into eukaryotic host cells, facilitating the establishment and dissemination of infection. Along with PscG, prevents premature polymerization of the PscF/SctF needle protein within the cytoplasm. Required for type III secretion needle assembly. Also required for cytotoxicity by influencing PscF/SctF levels. In Pseudomonas aeruginosa (strain ATCC 15692 / DSM 22644 / CIP 104116 / JCM 14847 / LMG 12228 / 1C / PRS 101 / PAO1), this protein is Type 3 secretion system chaperone PscE (pscE).